A 345-amino-acid chain; its full sequence is Protein GAMETE CELL DEFECTIVE 1, mitochondrial (345 aa).

The N-terminal 43 residues, Met-1–Gly-43, are a transit peptide targeting the mitochondrion. The disordered stretch occupies residues Leu-36 to Pro-82.

The protein localises to the mitochondrion. Functionally, essential for fertility (male and female gametophyte functions and development). Required for the integrity of female gametic mitochondria. Involved in embryo apical-basal patterning, and particularly dorsal-ventral patterning, during early embryogenesis, and endosperm free nucleus positioning and development as well as early endosperm development, probably by modulating the expression pattern of related genes (e.g. AL1, MYB3/AL2, CYP78A13/GE, PNH1, HAZ1, MPK6 and OSH1). Has function in triggering of endosperm programmed cell death (PCD) leading to syncytial endosperm cellularization and starchy endosperm cell maturation. Implicated in central vacuole dynamics necessary for microspore development leading to pollen production, and for pollen development and germination. This chain is Protein GAMETE CELL DEFECTIVE 1, mitochondrial, found in Oryza sativa subsp. indica (Rice).